The sequence spans 183 residues: Inner membrane-spanning protein YciB (183 aa).

The next 5 membrane-spanning stretches (helical) occupy residues 22–42, 50–70, 72–92, 118–138, and 148–168; these read IYAA…ITYL, MHLA…FFHD, AFIK…LIAS, VTWY…YIAF, and FKVF…VVYL.

It belongs to the YciB family.

The protein resides in the cell inner membrane. Its function is as follows. Plays a role in cell envelope biogenesis, maintenance of cell envelope integrity and membrane homeostasis. The polypeptide is Inner membrane-spanning protein YciB (Shewanella frigidimarina (strain NCIMB 400)).